A 137-amino-acid chain; its full sequence is DNA-binding protein H-NS (137 aa).

Residues T13 to L65 are a coiled coil. The DNA-binding element occupies Q112–A117.

Belongs to the histone-like protein H-NS family. In terms of assembly, homodimer that oligomerizes on DNA into higher-order complexes that form bridges between disparate regions of DNA compacting it. Interacts with Hha, YdgT and StpA.

Its subcellular location is the cytoplasm. It is found in the nucleoid. In terms of biological role, a DNA-binding protein implicated in transcriptional repression and chromosome organization and compaction. Binds AT-rich DNA, repressing its transcription; about 754/4438 tested genes (15%) bind to H-NS, 70% of these are AT-rich and correspond to horizontally transferred geness (HTG), thus playing a central role in silencing foreign genes. This offers the selective advantage of silencing foreign DNA. Binds nucleation sites in AT-rich DNA and bridges them, forming higher-order nucleoprotein complexes and condensing the chromosome. A subset of genes are repressed by H-NS in association with Hha and/or YdgT. This chain is DNA-binding protein H-NS (hns), found in Salmonella typhimurium (strain 14028s / SGSC 2262).